Reading from the N-terminus, the 281-residue chain is Pantothenate synthetase (281 aa).

Position 30–37 (30–37) interacts with ATP; it reads MGYLHEGH. The Proton donor role is filled by histidine 37. Residue glutamine 61 coordinates (R)-pantoate. Glutamine 61 contributes to the beta-alanine binding site. An ATP-binding site is contributed by 147 to 150; the sequence is GQKD. A (R)-pantoate-binding site is contributed by glutamine 153. ATP-binding positions include valine 176 and 184–187; that span reads MSSR.

Belongs to the pantothenate synthetase family. In terms of assembly, homodimer.

It localises to the cytoplasm. The catalysed reaction is (R)-pantoate + beta-alanine + ATP = (R)-pantothenate + AMP + diphosphate + H(+). It participates in cofactor biosynthesis; (R)-pantothenate biosynthesis; (R)-pantothenate from (R)-pantoate and beta-alanine: step 1/1. Functionally, catalyzes the condensation of pantoate with beta-alanine in an ATP-dependent reaction via a pantoyl-adenylate intermediate. The polypeptide is Pantothenate synthetase (Acetivibrio thermocellus (strain ATCC 27405 / DSM 1237 / JCM 9322 / NBRC 103400 / NCIMB 10682 / NRRL B-4536 / VPI 7372) (Clostridium thermocellum)).